Reading from the N-terminus, the 635-residue chain is MQRSIATVSLSGTLPEKLEAIAAAGFDGVEIFENDLLYYAGSPRQVRQMCADLGIAITLFQPFRDFEGCRRDRLQKNLDRAERKFDLMQELGTDLVLVCSNVQADALGDEQLLVDDLRLLGEHAGKRGLRIGYEALAWGRHVNTYQQVWNLVRQADHPALGVILDSFHTLSLKGDPSAIRDIPGDKIFFVQMADAPILAMDVLEWSRHFRCFPGQGEMDMAGFLAPILATGYRGPLSLEIFNDGFRAAPTRQNAADGLRSLLYLEEQTRLRLEQENTPIEPGVLFSPPPASAYDGVEFLEFAVDEAVGARLGNWLKRLGFAEAGKHRSKEVQLLRQGDINIVLNAEPYSFGHNFFEAHGPSLCATALRVKDQQAALKRATAFRGQPFRGLVGPNECEVPAVRAPDGSLLYLVEQGTAGHTLYDTDFSLDNNATATGGLRRIDHMALALPAESLDSWVLFYKSLFDFAADDEVVLPDPYGLVKSRALRSQCGTLRLPLNISENRNTAIAHALSSYRGSGVHHIAFDCDDIFREVARAKLAGVPLLEIPLNYYDDLAARFDFDDEFLSELAYYNVLYDRDAQGGELFHVYTEPFEERFFFEIIQRKAGYAGYGAANVAVRLAAMAKARSGAARKPVL.

A divalent metal cation is bound by residues Glu134, Asp165, Gln191, and Glu239. VOC domains lie at 295–414 (GVEF…LVEQ) and 440–590 (RIDH…VYTE). Mg(2+) is bound by residues His443, His521, and Glu599.

It belongs to the bacterial two-domain DSD family. Homodimer. Requires Co(2+) as cofactor. Ni(2+) serves as cofactor. Mg(2+) is required as a cofactor. The cofactor is Mn(2+).

It catalyses the reaction 3-dehydroshikimate = 3,4-dihydroxybenzoate + H2O. It participates in aromatic compound metabolism; 3,4-dihydroxybenzoate biosynthesis. In terms of biological role, catalyzes the conversion of 3-dehydroshikimate to protocatechuate (3,4-dihydroxybenzoate), a common intermediate of quinate and shikimate degradation pathways. The chain is 3-dehydroshikimate dehydratase from Pseudomonas putida (strain ATCC 47054 / DSM 6125 / CFBP 8728 / NCIMB 11950 / KT2440).